A 409-amino-acid chain; its full sequence is Putative lipoate-protein ligase A (409 aa).

The 185-residue stretch at 146 to 330 (GPDNCRLLFY…RFQKTFKVDG (185 aa)) folds into the BPL/LPL catalytic domain. Residues Arg188, 193–196 (GTVL), and Lys249 each bind ATP. Position 249 (Lys249) interacts with (R)-lipoate.

It belongs to the LplA family. As to quaternary structure, monomer.

It carries out the reaction L-lysyl-[lipoyl-carrier protein] + (R)-lipoate + ATP = N(6)-[(R)-lipoyl]-L-lysyl-[lipoyl-carrier protein] + AMP + diphosphate + H(+). The protein operates within protein modification; protein lipoylation via exogenous pathway; protein N(6)-(lipoyl)lysine from lipoate: step 1/2. It functions in the pathway protein modification; protein lipoylation via exogenous pathway; protein N(6)-(lipoyl)lysine from lipoate: step 2/2. Functionally, catalyzes both the ATP-dependent activation of exogenously supplied lipoate to lipoyl-AMP and the transfer of the activated lipoyl onto the lipoyl domains of lipoate-dependent enzymes. The sequence is that of Putative lipoate-protein ligase A (AIM22) from Saccharomyces cerevisiae (strain RM11-1a) (Baker's yeast).